The following is a 2542-amino-acid chain: Probable polyketide synthase 41 (2542 aa).

Residues 11–441 (CNKVAIIGIG…GSNCCLIVSS (431 aa)) enclose the Ketosynthase family 3 (KS3) domain. Catalysis depends on for beta-ketoacyl synthase activity residues cysteine 177, histidine 318, and histidine 360. Residues 628-661 (GIKPSIIVGHSLGEISSSYCSGMIDLDTFCYLIY) are acyl/malonyl transferase. The active-site For acyl/malonyl transferase activity is serine 638. Residues 926 to 1059 (INHLGISNSN…ANFQLFSRGP (134 aa)) are N-terminal hotdog fold. One can recognise a PKS/mFAS DH domain in the interval 926–1231 (INHLGISNSN…FKSTTKIKDP (306 aa)). Histidine 959 serves as the catalytic Proton acceptor; for dehydratase activity. Residues 1083–1231 (NLTKLSKQEL…FKSTTKIKDP (149 aa)) form a C-terminal hotdog fold region. Residue aspartate 1145 is the Proton donor; for dehydratase activity of the active site. One can recognise a Carrier domain in the interval 2459–2537 (NVELTVDQLI…SFIQLVKNSM (79 aa)). Position 2496 is an O-(pantetheine 4'-phosphoryl)serine (serine 2496).

Pantetheine 4'-phosphate is required as a cofactor.

In terms of biological role, probable polyketide synthase. This is Probable polyketide synthase 41 (pks41) from Dictyostelium discoideum (Social amoeba).